The sequence spans 120 residues: uncharacterized protein (120 aa).

A helical transmembrane segment spans residues 19 to 41; that stretch reads YPELFITWCVMTYTFGVAGYMLG. The tract at residues 57 to 78 is disordered; the sequence is SKNAHPWEDTKSSSGKSDESLD. Basic and acidic residues predominate over residues 61–75; it reads HPWEDTKSSSGKSDE.

Its subcellular location is the membrane. This is an uncharacterized protein from Schizosaccharomyces pombe (strain 972 / ATCC 24843) (Fission yeast).